A 275-amino-acid polypeptide reads, in one-letter code: NH(3)-dependent NAD(+) synthetase (275 aa).

An ATP-binding site is contributed by 46–53; the sequence is GISGGQDS. D52 serves as a coordination point for Mg(2+). R140 contacts deamido-NAD(+). Residue T160 participates in ATP binding. Position 165 (E165) interacts with Mg(2+). 2 residues coordinate deamido-NAD(+): K173 and D180. The ATP site is built by K189 and T211. 260–261 contributes to the deamido-NAD(+) binding site; that stretch reads HK.

Belongs to the NAD synthetase family. In terms of assembly, homodimer.

The enzyme catalyses deamido-NAD(+) + NH4(+) + ATP = AMP + diphosphate + NAD(+) + H(+). It functions in the pathway cofactor biosynthesis; NAD(+) biosynthesis; NAD(+) from deamido-NAD(+) (ammonia route): step 1/1. Catalyzes the ATP-dependent amidation of deamido-NAD to form NAD. Uses ammonia as a nitrogen source. The chain is NH(3)-dependent NAD(+) synthetase from Salmonella heidelberg (strain SL476).